The chain runs to 233 residues: Small ribosomal subunit protein uS7m (233 aa).

Residues 1-28 (MAAPTAAGLCPRLRAWLPRLTQVRWSRY) constitute a mitochondrion transit peptide.

Belongs to the universal ribosomal protein uS7 family. As to quaternary structure, component of the mitochondrial ribosome small subunit (28S) which comprises a 12S rRNA and about 30 distinct proteins.

The protein localises to the mitochondrion. This is Small ribosomal subunit protein uS7m (MRPS7) from Gallus gallus (Chicken).